Here is a 180-residue protein sequence, read N- to C-terminus: NADH-quinone oxidoreductase subunit I (180 aa).

4Fe-4S ferredoxin-type domains lie at 50-80 (LTRD…LQKA) and 90-119 (EFFR…LTPD). Residues Cys60, Cys63, Cys66, Cys70, Cys99, Cys102, Cys105, and Cys109 each coordinate [4Fe-4S] cluster.

It belongs to the complex I 23 kDa subunit family. NDH-1 is composed of 14 different subunits. Subunits NuoA, H, J, K, L, M, N constitute the membrane sector of the complex. The cofactor is [4Fe-4S] cluster.

It localises to the cell inner membrane. It carries out the reaction a quinone + NADH + 5 H(+)(in) = a quinol + NAD(+) + 4 H(+)(out). Functionally, NDH-1 shuttles electrons from NADH, via FMN and iron-sulfur (Fe-S) centers, to quinones in the respiratory chain. The immediate electron acceptor for the enzyme in this species is believed to be ubiquinone. Couples the redox reaction to proton translocation (for every two electrons transferred, four hydrogen ions are translocated across the cytoplasmic membrane), and thus conserves the redox energy in a proton gradient. This chain is NADH-quinone oxidoreductase subunit I, found in Acinetobacter baumannii (strain ACICU).